We begin with the raw amino-acid sequence, 234 residues long: uncharacterized protein (234 aa).

The segment at 1–23 is disordered; that stretch reads MVDQIRSPSWKSGFPSHQHQQGS.

This is an uncharacterized protein from Caenorhabditis elegans.